A 581-amino-acid polypeptide reads, in one-letter code: Arginine--tRNA ligase (581 aa).

Residues 126 to 136 (PNLAKEMHVGH) carry the 'HIGH' region motif.

This sequence belongs to the class-I aminoacyl-tRNA synthetase family. As to quaternary structure, monomer.

Its subcellular location is the cytoplasm. The catalysed reaction is tRNA(Arg) + L-arginine + ATP = L-arginyl-tRNA(Arg) + AMP + diphosphate. The chain is Arginine--tRNA ligase from Shewanella sp. (strain MR-7).